Here is a 164-residue protein sequence, read N- to C-terminus: Peptide methionine sulfoxide reductase MsrA (164 aa).

Cys16 is an active-site residue.

It belongs to the MsrA Met sulfoxide reductase family.

It catalyses the reaction L-methionyl-[protein] + [thioredoxin]-disulfide + H2O = L-methionyl-(S)-S-oxide-[protein] + [thioredoxin]-dithiol. The catalysed reaction is [thioredoxin]-disulfide + L-methionine + H2O = L-methionine (S)-S-oxide + [thioredoxin]-dithiol. Its function is as follows. Has an important function as a repair enzyme for proteins that have been inactivated by oxidation. Catalyzes the reversible oxidation-reduction of methionine sulfoxide in proteins to methionine. The polypeptide is Peptide methionine sulfoxide reductase MsrA (Clostridium tetani (strain Massachusetts / E88)).